Consider the following 426-residue polypeptide: MSEVDVVILAAGKGSRMKDDLSKPLHKVAGLPMLEWICRAVRKFNPKNIIAVQGADEDFSSYVDETVVQKEQLGSADALRCAFPKIDAEKLIVINADMPLMTENDLVDLVEKGEGFDAALLTADLKKPFGYGRVIPVGERNVVEQIVEERDATADQKKLHLVNAGVYLFRADYIKRAINNVTTDNSQSEYYLTDALPGAKIVQVADWHDILGVNTQQQLAAVSKIARKRINDQIMANGVTMIDPLTTYIDANVLVGTGTIIKPGTVIEHDSVIGAENEIGPYAHLREKTVTGIDVHIGNFVETKNAKIGDHTHIGHLTYVGDAEVGQAVNIGAGTIFVNYDGKNKHMTKVGDRAFIGSNSKLVAPVEIASEAITAAGSTITDNVDQHAMGIARQRQTNKSDFWQRMPHEDFATEYDAKHDQRDDQP.

The segment at 1–216 (MSEVDVVILA…WHDILGVNTQ (216 aa)) is pyrophosphorylase. UDP-N-acetyl-alpha-D-glucosamine-binding positions include 9–12 (LAAG), Lys-23, and Gln-69. Asp-97 contributes to the Mg(2+) binding site. UDP-N-acetyl-alpha-D-glucosamine contacts are provided by Gly-132, Glu-148, Asn-163, and Asn-214. Asn-214 serves as a coordination point for Mg(2+). The tract at residues 217 to 237 (QQLAAVSKIARKRINDQIMAN) is linker. The N-acetyltransferase stretch occupies residues 238–426 (GVTMIDPLTT…AKHDQRDDQP (189 aa)). UDP-N-acetyl-alpha-D-glucosamine is bound by residues Arg-286 and Lys-304. His-316 (proton acceptor) is an active-site residue. Positions 319 and 330 each coordinate UDP-N-acetyl-alpha-D-glucosamine. Acetyl-CoA contacts are provided by residues Ala-333, 339–340 (NY), Ser-358, Ala-376, and Arg-393.

It in the N-terminal section; belongs to the N-acetylglucosamine-1-phosphate uridyltransferase family. The protein in the C-terminal section; belongs to the transferase hexapeptide repeat family. Homotrimer. It depends on Mg(2+) as a cofactor.

The protein localises to the cytoplasm. The enzyme catalyses alpha-D-glucosamine 1-phosphate + acetyl-CoA = N-acetyl-alpha-D-glucosamine 1-phosphate + CoA + H(+). It catalyses the reaction N-acetyl-alpha-D-glucosamine 1-phosphate + UTP + H(+) = UDP-N-acetyl-alpha-D-glucosamine + diphosphate. The protein operates within nucleotide-sugar biosynthesis; UDP-N-acetyl-alpha-D-glucosamine biosynthesis; N-acetyl-alpha-D-glucosamine 1-phosphate from alpha-D-glucosamine 6-phosphate (route II): step 2/2. Its pathway is nucleotide-sugar biosynthesis; UDP-N-acetyl-alpha-D-glucosamine biosynthesis; UDP-N-acetyl-alpha-D-glucosamine from N-acetyl-alpha-D-glucosamine 1-phosphate: step 1/1. It participates in bacterial outer membrane biogenesis; LPS lipid A biosynthesis. Functionally, catalyzes the last two sequential reactions in the de novo biosynthetic pathway for UDP-N-acetylglucosamine (UDP-GlcNAc). The C-terminal domain catalyzes the transfer of acetyl group from acetyl coenzyme A to glucosamine-1-phosphate (GlcN-1-P) to produce N-acetylglucosamine-1-phosphate (GlcNAc-1-P), which is converted into UDP-GlcNAc by the transfer of uridine 5-monophosphate (from uridine 5-triphosphate), a reaction catalyzed by the N-terminal domain. In Oenococcus oeni (strain ATCC BAA-331 / PSU-1), this protein is Bifunctional protein GlmU.